A 304-amino-acid chain; its full sequence is Ornithine carbamoyltransferase (304 aa).

Carbamoyl phosphate-binding positions include 53–56 (STRT), Gln80, Arg104, and 131–134 (HPCQ). Residues Asn162, Asp222, and 226 to 227 (SM) contribute to the L-ornithine site. Residues 261-262 (CL) and Arg289 contribute to the carbamoyl phosphate site.

This sequence belongs to the aspartate/ornithine carbamoyltransferase superfamily. OTCase family.

Its subcellular location is the cytoplasm. The enzyme catalyses carbamoyl phosphate + L-ornithine = L-citrulline + phosphate + H(+). It participates in amino-acid biosynthesis; L-arginine biosynthesis; L-arginine from L-ornithine and carbamoyl phosphate: step 1/3. In terms of biological role, reversibly catalyzes the transfer of the carbamoyl group from carbamoyl phosphate (CP) to the N(epsilon) atom of ornithine (ORN) to produce L-citrulline. This is Ornithine carbamoyltransferase from Rhizobium johnstonii (strain DSM 114642 / LMG 32736 / 3841) (Rhizobium leguminosarum bv. viciae).